The chain runs to 342 residues: Probable long-chain-alcohol O-fatty-acyltransferase 3 (342 aa).

The next 8 helical transmembrane spans lie at 9-29 (IKLWISAIISISYCYYLSTGI), 36-56 (LLSVLPVCALFLVFPLFFSYV), 58-78 (FSGCMAFFLSWLANFKLILFS), 115-135 (IPIWLFAIKVVIFVVLLQMYE), 153-173 (IFLELEIVFMLVKALVFITLG), 227-247 (MFLGVFAAFLVSGAVHEMLFF), 255-275 (TGEVTWFFLLHGVCTVAEVAV), and 297-317 (VGFVVVTSGWFFFPLIRSGII).

Belongs to the wax synthase family.

The protein localises to the membrane. The enzyme catalyses a long chain fatty alcohol + a fatty acyl-CoA = a wax ester + CoA. Functionally, catalyzes the final step in the synthesis of long-chain linear esters (waxes). This chain is Probable long-chain-alcohol O-fatty-acyltransferase 3 (AT3), found in Arabidopsis thaliana (Mouse-ear cress).